Consider the following 131-residue polypeptide: Small ribosomal subunit protein bS6 (131 aa).

Residues 98 to 131 (EASPMVKAKDERRERREDFANETADDSEAGDSEE) form a disordered region. Positions 104–116 (KAKDERRERREDF) are enriched in basic and acidic residues. Positions 120–131 (TADDSEAGDSEE) are enriched in acidic residues.

It belongs to the bacterial ribosomal protein bS6 family.

In terms of biological role, binds together with bS18 to 16S ribosomal RNA. This is Small ribosomal subunit protein bS6 from Klebsiella pneumoniae subsp. pneumoniae (strain ATCC 700721 / MGH 78578).